A 198-amino-acid chain; its full sequence is Pyridoxal 5'-phosphate synthase subunit PdxT (198 aa).

Residue 49–51 coordinates L-glutamine; sequence GES. Catalysis depends on Cys-81, which acts as the Nucleophile. L-glutamine contacts are provided by residues Arg-112 and 140–141; that span reads IR. Catalysis depends on charge relay system residues His-176 and Glu-178.

Belongs to the glutaminase PdxT/SNO family. In terms of assembly, in the presence of PdxS, forms a dodecamer of heterodimers. Only shows activity in the heterodimer.

It carries out the reaction aldehydo-D-ribose 5-phosphate + D-glyceraldehyde 3-phosphate + L-glutamine = pyridoxal 5'-phosphate + L-glutamate + phosphate + 3 H2O + H(+). It catalyses the reaction L-glutamine + H2O = L-glutamate + NH4(+). It participates in cofactor biosynthesis; pyridoxal 5'-phosphate biosynthesis. Functionally, catalyzes the hydrolysis of glutamine to glutamate and ammonia as part of the biosynthesis of pyridoxal 5'-phosphate. The resulting ammonia molecule is channeled to the active site of PdxS. In Methanocella arvoryzae (strain DSM 22066 / NBRC 105507 / MRE50), this protein is Pyridoxal 5'-phosphate synthase subunit PdxT.